A 151-amino-acid polypeptide reads, in one-letter code: Large ribosomal subunit protein bL9 (151 aa).

It belongs to the bacterial ribosomal protein bL9 family.

In terms of biological role, binds to the 23S rRNA. The protein is Large ribosomal subunit protein bL9 of Nitrosomonas europaea (strain ATCC 19718 / CIP 103999 / KCTC 2705 / NBRC 14298).